The primary structure comprises 124 residues: MVKLTSIAAGVAAIAAGVAAAPATTTLSPSDERVNLVELGVYVSDIRAHLAQYYLFQAAHPTETYPVEIAEAVFNYGDFTTMLTGIPAEQVTRVITGVPWYSTRLRPAISSALSKDGIYTAIPK.

Positions 1–20 are cleaved as a signal peptide; it reads MVKLTSIAAGVAAIAAGVAA.

This sequence belongs to the SRP1/TIP1 family. Seripauperin subfamily.

The polypeptide is Seripauperin-19 (PAU19) (Saccharomyces cerevisiae (strain ATCC 204508 / S288c) (Baker's yeast)).